A 320-amino-acid chain; its full sequence is Lipoyl synthase (320 aa).

The span at 1 to 24 shows a compositional bias: basic and acidic residues; that stretch reads MIGKLVRDLKIPDQRHPEKAHRPD. A disordered region spans residues 1-30; sequence MIGKLVRDLKIPDQRHPEKAHRPDNVQPKK. Residues Cys-60, Cys-65, Cys-71, Cys-86, Cys-90, Cys-93, and Ser-300 each coordinate [4Fe-4S] cluster. One can recognise a Radical SAM core domain in the interval 72 to 289; it reads WSQGHATMMI…EKAAYGKGFL (218 aa).

Belongs to the radical SAM superfamily. Lipoyl synthase family. It depends on [4Fe-4S] cluster as a cofactor.

The protein localises to the cytoplasm. It catalyses the reaction [[Fe-S] cluster scaffold protein carrying a second [4Fe-4S](2+) cluster] + N(6)-octanoyl-L-lysyl-[protein] + 2 oxidized [2Fe-2S]-[ferredoxin] + 2 S-adenosyl-L-methionine + 4 H(+) = [[Fe-S] cluster scaffold protein] + N(6)-[(R)-dihydrolipoyl]-L-lysyl-[protein] + 4 Fe(3+) + 2 hydrogen sulfide + 2 5'-deoxyadenosine + 2 L-methionine + 2 reduced [2Fe-2S]-[ferredoxin]. It participates in protein modification; protein lipoylation via endogenous pathway; protein N(6)-(lipoyl)lysine from octanoyl-[acyl-carrier-protein]: step 2/2. Catalyzes the radical-mediated insertion of two sulfur atoms into the C-6 and C-8 positions of the octanoyl moiety bound to the lipoyl domains of lipoate-dependent enzymes, thereby converting the octanoylated domains into lipoylated derivatives. The protein is Lipoyl synthase of Cereibacter sphaeroides (strain ATCC 17029 / ATH 2.4.9) (Rhodobacter sphaeroides).